Consider the following 212-residue polypeptide: Coat protein (212 aa).

Belongs to the potexvirus capsid protein family.

Its subcellular location is the virion. Functionally, required for genome encapsidation. Forms ribonucleoprotein complexes along with TGB1 helicase and viral RNA. The sequence is that of Coat protein from Chenopodium album (Fat hen).